Here is a 102-residue protein sequence, read N- to C-terminus: Small ribosomal subunit protein uS10 (102 aa).

This sequence belongs to the universal ribosomal protein uS10 family. In terms of assembly, part of the 30S ribosomal subunit.

Involved in the binding of tRNA to the ribosomes. This is Small ribosomal subunit protein uS10 from Exiguobacterium sibiricum (strain DSM 17290 / CCUG 55495 / CIP 109462 / JCM 13490 / 255-15).